The sequence spans 180 residues: Inosine/xanthosine triphosphatase (180 aa).

Residue 8–13 participates in substrate binding; sequence TTNPAK. Asp38 is a binding site for Mg(2+).

The protein belongs to the YjjX NTPase family. As to quaternary structure, homodimer. It depends on Mg(2+) as a cofactor. The cofactor is Mn(2+).

It catalyses the reaction XTP + H2O = XDP + phosphate + H(+). The catalysed reaction is ITP + H2O = IDP + phosphate + H(+). In terms of biological role, phosphatase that hydrolyzes non-canonical purine nucleotides such as XTP and ITP to their respective diphosphate derivatives. Probably excludes non-canonical purines from DNA/RNA precursor pool, thus preventing their incorporation into DNA/RNA and avoiding chromosomal lesions. The chain is Inosine/xanthosine triphosphatase from Yersinia pseudotuberculosis serotype O:1b (strain IP 31758).